The sequence spans 608 residues: MAAAAAAVGPGAGGAGSAVPGGAGPCATVSVFPGARLLTIGDANGEIQRHAEQQALRLEVRAGPDSAGIALYSHEDVCVFKCSVSRETECSRVGKQSFIITLGCNSVLIQFATPNDFCSFYNILKTCRGHTLERSVFSERTEESSAVQYFQFYGYLSQQQNMMQDYVRTGTYQRAILQNHTDFKDKIVLDVGCGSGILSFFAAQAGARKIYAVEASTMAQHAEVLVKSNNLTDRIVVIPGKVEEVSLPEQVDIIISEPMGYMLFNERMLESYLHAKKYLKPSGNMFPTIGDVHLAPFTDEQLYMEQFTKANFWYQPSFHGVDLSALRGAAVDEYFRQPVVDTFDIRILMAKSVKYTVNFLEAKEGDLHRIEIPFKFHMLHSGLVHGLAFWFDVAFIGSIMTVWLSTAPTEPLTHWYQVRCLFQSPLFAKAGDTLSGTCLLIANKRQSYDISIVAQVDQTGSKSSNLLDLKNPFFRYTGTTPSPPPGSHYTSPSENMWNTGSTYNLSSGMAVAGMPTAYDLSSVIASGSSVGHNNLIPLANTGIVNHTHSRMGSIMSTGIVQGSSGAQGSGGGSTSAHYAVNSQFTMGGPAISMASPMSIPTNTMHYGS.

Ala-2 carries the post-translational modification N-acetylalanine. Residues 27–138 are interaction with C9orf72; that stretch reads ATVSVFPGAR…GHTLERSVFS (112 aa). In terms of domain architecture, SAM-dependent MTase PRMT-type spans 146–453; the sequence is AVQYFQFYGY…KRQSYDISIV (308 aa). Residues Gln-159, Arg-168, Gly-192, and Glu-214 each coordinate S-adenosyl-L-methionine. Position 216 is a phosphoserine (Ser-216). Lys-227 participates in a covalent cross-link: Glycyl lysine isopeptide (Lys-Gly) (interchain with G-Cter in ubiquitin). 2 residues coordinate S-adenosyl-L-methionine: Glu-243 and Ser-271. The required for nuclear translocation stretch occupies residues 346 to 379; the sequence is RILMAKSVKYTVNFLEAKEGDLHRIEIPFKFHML. Residues 499 to 608 are transactivation domain; that stretch reads TGSTYNLSSG…IPTNTMHYGS (110 aa). Arg-550 bears the Dimethylated arginine mark.

This sequence belongs to the class I-like SAM-binding methyltransferase superfamily. Protein arginine N-methyltransferase family. As to quaternary structure, homodimer. Interacts with NR1H4. Interacts with SNRPC. Interacts with the C-terminus of NCOA2/GRIP1, NCO3/ACTR and NCOA1/SRC1. Part of a complex consisting of CARM1, EP300/P300 and NCOA2/GRIP1. Interacts with FLII, TP53, myogenic factor MEF2, EP300/P300, TRIM24, CREBBP and CTNNB1. Interacts with RELA. Identified in a complex containing CARM1, TRIM24 and NCOA2/GRIP1. Interacts with NCOA3/SRC3. Interacts with SKP2. Interacts (via PH domain-like fold) with C9orf72. Interacts with PARP1; promoting PARP1 recruimtent to replication forks. (Microbial infection) Interacts with HTLV-1 protein Tax. Auto-methylated on Arg-550. Methylation enhances transcription coactivator activity. Methylation is required for its role in the regulation of pre-mRNA alternative splicing. In terms of processing, phosphorylation at Ser-216 is strongly increased during mitosis, and decreases rapidly to a very low, basal level after entry into the G1 phase of the cell cycle. Phosphorylation at Ser-216 may promote location in the cytosol. Phosphorylation at Ser-216 interferes with S-adenosyl-L-methionine binding and strongly reduces methyltransferase activity. Post-translationally, ubiquitinated by E3 ubiquitin-protein ligase complex containing FBXO9 at Lys-227; leading to proteasomal degradation. As to expression, overexpressed in prostate adenocarcinomas and high-grade prostatic intraepithelial neoplasia.

It is found in the nucleus. It localises to the cytoplasm. The protein resides in the chromosome. It catalyses the reaction L-arginyl-[protein] + 2 S-adenosyl-L-methionine = N(omega),N(omega)-dimethyl-L-arginyl-[protein] + 2 S-adenosyl-L-homocysteine + 2 H(+). Methylation of H3R17 (H3R17me) by CARM1 is stimulated by preacetylation of H3 'Lys-18' (H3K18ac) H3 'Lys-23' (H3K23ac) by EP300 and blocked by citrullination of H3 'Arg-17' (H3R17ci) by PADI4. Functionally, methylates (mono- and asymmetric dimethylation) the guanidino nitrogens of arginyl residues in several proteins involved in DNA packaging, transcription regulation, pre-mRNA splicing, and mRNA stability. Recruited to promoters upon gene activation together with histone acetyltransferases from EP300/P300 and p160 families, methylates histone H3 at 'Arg-17' (H3R17me), forming mainly asymmetric dimethylarginine (H3R17me2a), leading to activation of transcription via chromatin remodeling. During nuclear hormone receptor activation and TCF7L2/TCF4 activation, acts synergically with EP300/P300 and either one of the p160 histone acetyltransferases NCOA1/SRC1, NCOA2/GRIP1 and NCOA3/ACTR or CTNNB1/beta-catenin to activate transcription. During myogenic transcriptional activation, acts together with NCOA3/ACTR as a coactivator for MEF2C. During monocyte inflammatory stimulation, acts together with EP300/P300 as a coactivator for NF-kappa-B. Acts as a coactivator for PPARG, promotes adipocyte differentiation and the accumulation of brown fat tissue. Plays a role in the regulation of pre-mRNA alternative splicing by methylation of splicing factors. Also seems to be involved in p53/TP53 transcriptional activation. Methylates EP300/P300, both at 'Arg-2142', which may loosen its interaction with NCOA2/GRIP1, and at 'Arg-580' and 'Arg-604' in the KIX domain, which impairs its interaction with CREB and inhibits CREB-dependent transcriptional activation. Also methylates arginine residues in RNA-binding proteins PABPC1, ELAVL1 and ELAV4, which may affect their mRNA-stabilizing properties and the half-life of their target mRNAs. Acts as a transcriptional coactivator of ACACA/acetyl-CoA carboxylase by enriching H3R17 methylation at its promoter, thereby positively regulating fatty acid synthesis. Independently of its methyltransferase activity, involved in replication fork progression: promotes PARP1 recruitment to replication forks, leading to poly-ADP-ribosylation of chromatin at replication forks and reduced fork speed. This chain is Histone-arginine methyltransferase CARM1 (CARM1), found in Homo sapiens (Human).